We begin with the raw amino-acid sequence, 115 residues long: NADH-ubiquinone oxidoreductase chain 3 (115 aa).

3 helical membrane passes run 4–24 (LTAL…AFWL), 55–75 (FFLV…LLPL), and 87–107 (MMLT…YEWM).

It belongs to the complex I subunit 3 family. In terms of assembly, core subunit of respiratory chain NADH dehydrogenase (Complex I) which is composed of 45 different subunits. Interacts with TMEM186. Interacts with TMEM242.

It localises to the mitochondrion inner membrane. The enzyme catalyses a ubiquinone + NADH + 5 H(+)(in) = a ubiquinol + NAD(+) + 4 H(+)(out). In terms of biological role, core subunit of the mitochondrial membrane respiratory chain NADH dehydrogenase (Complex I) which catalyzes electron transfer from NADH through the respiratory chain, using ubiquinone as an electron acceptor. Essential for the catalytic activity of complex I. The protein is NADH-ubiquinone oxidoreductase chain 3 of Peromyscus boylii (Brush deermouse).